The sequence spans 722 residues: Cellulose synthase-like protein G2 (722 aa).

A run of 2 helical transmembrane segments spans residues 25–45 and 51–71; these read IYAV…VHSI and TLIT…WATT. Catalysis depends on residues Asp-139 and Asp-437. A run of 6 helical transmembrane segments spans residues 514–534, 548–568, 583–605, 635–655, 660–680, and 702–722; these read FWPF…VALI, FWLY…DFLL, WMVR…TLNL, PSSS…LAFM, GIFT…FAVV, and ICFL…FFLK.

The protein belongs to the glycosyltransferase 2 family. Plant cellulose synthase-like G subfamily. As to expression, expressed in young seedlings, primarily in the vascular tissue.

It localises to the golgi apparatus membrane. Thought to be a Golgi-localized beta-glycan synthase that polymerize the backbones of noncellulosic polysaccharides (hemicelluloses) of plant cell wall. This is Cellulose synthase-like protein G2 (CSLG2) from Arabidopsis thaliana (Mouse-ear cress).